We begin with the raw amino-acid sequence, 1102 residues long: Centrosomal protein of 128 kDa (1102 aa).

A phosphoserine mark is found at Ser31, Ser248, and Ser290. 2 coiled-coil regions span residues 215 to 822 and 878 to 959; these read VSDR…LETE and EELK…ALQM. Positions 326-346 are disordered; that stretch reads QHQVPCISKQPLSHQDDQGDD. Disordered regions lie at residues 991–1048 and 1070–1102; these read SEKT…DHSR and DPASIEGDTTSLPANGTSPQSKKEEHEIKKYKK. Basic and acidic residues predominate over residues 1009–1027; the sequence is QQRRDDTKPRIKSFRDDRP. 2 stretches are compositionally biased toward polar residues: residues 1039 to 1048 and 1076 to 1089; these read HSSSCQDHSR and GDTTSLPANGTSPQ. Residues 1090 to 1102 show a composition bias toward basic and acidic residues; the sequence is SKKEEHEIKKYKK.

It localises to the cytoplasm. The protein localises to the cytoskeleton. Its subcellular location is the microtubule organizing center. It is found in the centrosome. The protein resides in the centriole. It localises to the spindle pole. The polypeptide is Centrosomal protein of 128 kDa (Cep128) (Mus musculus (Mouse)).